We begin with the raw amino-acid sequence, 376 residues long: 23S rRNA (uracil(747)-C(5))-methyltransferase RlmC (376 aa).

[4Fe-4S] cluster is bound by residues Cys3, Cys11, Cys14, and Cys87. The S-adenosyl-L-methionine site is built by Gln212, Phe241, Glu262, and Asn307. The active-site Nucleophile is Cys334.

This sequence belongs to the class I-like SAM-binding methyltransferase superfamily. RNA M5U methyltransferase family. RlmC subfamily.

It carries out the reaction uridine(747) in 23S rRNA + S-adenosyl-L-methionine = 5-methyluridine(747) in 23S rRNA + S-adenosyl-L-homocysteine + H(+). Functionally, catalyzes the formation of 5-methyl-uridine at position 747 (m5U747) in 23S rRNA. The sequence is that of 23S rRNA (uracil(747)-C(5))-methyltransferase RlmC from Salmonella typhimurium (strain LT2 / SGSC1412 / ATCC 700720).